Here is a 442-residue protein sequence, read N- to C-terminus: Chromosomal replication initiator protein DnaA (442 aa).

Positions 1 to 69 are domain I, interacts with DnaA modulators; sequence METLWDGILS…AQAGEQVIGR (69 aa). Residues 69 to 103 form a domain II region; sequence RPIQVDFIVSEQSEEALKPVIEREPAPAAPPANVA. The interval 104–320 is domain III, AAA+ region; sequence SLNSKYTFSR…GALIRAVAYV (217 aa). ATP contacts are provided by G148, G150, K151, and T152. Positions 321 to 442 are domain IV, binds dsDNA; it reads SISGLPMTVE…GNRLEADARH (122 aa).

Belongs to the DnaA family. Oligomerizes as a right-handed, spiral filament on DNA at oriC.

It localises to the cytoplasm. Its function is as follows. Plays an essential role in the initiation and regulation of chromosomal replication. ATP-DnaA binds to the origin of replication (oriC) to initiate formation of the DNA replication initiation complex once per cell cycle. Binds the DnaA box (a 9 base pair repeat at the origin) and separates the double-stranded (ds)DNA. Forms a right-handed helical filament on oriC DNA; dsDNA binds to the exterior of the filament while single-stranded (ss)DNA is stabiized in the filament's interior. The ATP-DnaA-oriC complex binds and stabilizes one strand of the AT-rich DNA unwinding element (DUE), permitting loading of DNA polymerase. After initiation quickly degrades to an ADP-DnaA complex that is not apt for DNA replication. Binds acidic phospholipids. This Gloeobacter violaceus (strain ATCC 29082 / PCC 7421) protein is Chromosomal replication initiator protein DnaA.